The chain runs to 249 residues: Coproheme decarboxylase (249 aa).

Residues Arg131, 145–149 (YPMDK), His172, Gln185, and Ser223 each bind Fe-coproporphyrin III. Tyr145 is an active-site residue.

Belongs to the ChdC family. Type 1 subfamily. Requires Fe-coproporphyrin III as cofactor.

It carries out the reaction Fe-coproporphyrin III + 2 H2O2 + 2 H(+) = heme b + 2 CO2 + 4 H2O. The enzyme catalyses Fe-coproporphyrin III + H2O2 + H(+) = harderoheme III + CO2 + 2 H2O. It catalyses the reaction harderoheme III + H2O2 + H(+) = heme b + CO2 + 2 H2O. Its pathway is porphyrin-containing compound metabolism; protoheme biosynthesis. Functionally, involved in coproporphyrin-dependent heme b biosynthesis. Catalyzes the decarboxylation of Fe-coproporphyrin III (coproheme) to heme b (protoheme IX), the last step of the pathway. The reaction occurs in a stepwise manner with a three-propionate intermediate. In Halalkalibacterium halodurans (strain ATCC BAA-125 / DSM 18197 / FERM 7344 / JCM 9153 / C-125) (Bacillus halodurans), this protein is Coproheme decarboxylase.